We begin with the raw amino-acid sequence, 526 residues long: Glucose-6-phosphate isomerase (526 aa).

The active-site Proton donor is the Glu320. Residues His349 and Lys453 contribute to the active site.

Belongs to the GPI family.

The protein resides in the cytoplasm. The catalysed reaction is alpha-D-glucose 6-phosphate = beta-D-fructose 6-phosphate. It participates in carbohydrate biosynthesis; gluconeogenesis. Its pathway is carbohydrate degradation; glycolysis; D-glyceraldehyde 3-phosphate and glycerone phosphate from D-glucose: step 2/4. Catalyzes the reversible isomerization of glucose-6-phosphate to fructose-6-phosphate. The polypeptide is Glucose-6-phosphate isomerase (Gloeothece citriformis (strain PCC 7424) (Cyanothece sp. (strain PCC 7424))).